Consider the following 542-residue polypeptide: Thermosome subunit alpha (542 aa).

This sequence belongs to the TCP-1 chaperonin family. In terms of assembly, forms a Heterooligomeric complex of two stacked eight-membered rings.

Functionally, molecular chaperone; binds unfolded polypeptides in vitro, and has a weak ATPase activity. This chain is Thermosome subunit alpha (thsA), found in Methanothermobacter thermautotrophicus (strain ATCC 29096 / DSM 1053 / JCM 10044 / NBRC 100330 / Delta H) (Methanobacterium thermoautotrophicum).